A 129-amino-acid polypeptide reads, in one-letter code: M-zodatoxin-Lt8i (129 aa).

A signal peptide spans 1-20 (MKYFVVALALVAAFACIAES). Residues 21-60 (KPAESEHELAEVEEENELADLEDAVWLEHLADLSDLEEAR) constitute a propeptide that is removed on maturation.

This sequence belongs to the cationic peptide 06 (cytoinsectotoxin) family. As to expression, expressed by the venom gland.

Its subcellular location is the secreted. Functionally, insecticidal, cytolytic and antimicrobial peptide. Forms voltage-dependent, ion-permeable channels in membranes. At high concentration causes cell membrane lysis. The polypeptide is M-zodatoxin-Lt8i (cit 1-6) (Lachesana tarabaevi (Spider)).